Consider the following 199-residue polypeptide: MATAGRRGGAASERRERRESRRQEASPEKSNFLERVVTINRVAKVVKGGRRFSFTALVVVGDGNGMVGVGYGKAREVPAAIAKGVEEAKKHFFTVPRVQGTIPHPVIGEAAAGVVLLRPASPGTGVIAGGPVRAVLECAGVRDVLSKSLGSDNAVNIVHATVKALRALVPPEKVAVRRGLPLEEVAPPALLRAKAEAGV.

Positions 1 to 29 (MATAGRRGGAASERRERRESRRQEASPEK) are disordered. Positions 12-27 (SERRERRESRRQEASP) are enriched in basic and acidic residues. Positions 32–95 (FLERVVTINR…EEAKKHFFTV (64 aa)) constitute an S5 DRBM domain.

The protein belongs to the universal ribosomal protein uS5 family. In terms of assembly, part of the 30S ribosomal subunit. Contacts proteins S4 and S8.

With S4 and S12 plays an important role in translational accuracy. Functionally, located at the back of the 30S subunit body where it stabilizes the conformation of the head with respect to the body. The polypeptide is Small ribosomal subunit protein uS5 (Acidothermus cellulolyticus (strain ATCC 43068 / DSM 8971 / 11B)).